A 197-amino-acid chain; its full sequence is ATP-dependent Clp protease proteolytic subunit 2 (197 aa).

Ser96 serves as the catalytic Nucleophile. Residue His121 is part of the active site.

This sequence belongs to the peptidase S14 family. In terms of assembly, fourteen ClpP subunits assemble into 2 heptameric rings which stack back to back to give a disk-like structure with a central cavity, resembling the structure of eukaryotic proteasomes.

It is found in the cytoplasm. The catalysed reaction is Hydrolysis of proteins to small peptides in the presence of ATP and magnesium. alpha-casein is the usual test substrate. In the absence of ATP, only oligopeptides shorter than five residues are hydrolyzed (such as succinyl-Leu-Tyr-|-NHMec, and Leu-Tyr-Leu-|-Tyr-Trp, in which cleavage of the -Tyr-|-Leu- and -Tyr-|-Trp bonds also occurs).. Functionally, cleaves peptides in various proteins in a process that requires ATP hydrolysis. Has a chymotrypsin-like activity. Plays a major role in the degradation of misfolded proteins. The sequence is that of ATP-dependent Clp protease proteolytic subunit 2 from Synechococcus sp. (strain CC9605).